We begin with the raw amino-acid sequence, 393 residues long: Autophagy-related protein 18c (393 aa).

WD repeat units lie at residues 27–65 (KEEA…ETFR), 70–114 (DGGF…CISE), 199–239 (AHDS…RLQE), and 244–283 (VDRA…VGED).

Belongs to the WD repeat PROPPIN family. As to quaternary structure, component of the PI(3,5)P2 regulatory complex at least composed of ATG18, SAC/FIG4, FAB1 and VAC14. In terms of tissue distribution, expressed in roots, stems, flowers and leaves.

The protein resides in the preautophagosomal structure membrane. Its subcellular location is the vacuole membrane. Its function is as follows. The PI(3,5)P2 regulatory complex regulates both the synthesis and turnover of phosphatidylinositol 3,5-bisphosphate (PtdIns(3,5)P2). Required for autophagy. This chain is Autophagy-related protein 18c (ATG18C), found in Arabidopsis thaliana (Mouse-ear cress).